A 324-amino-acid chain; its full sequence is MYG1 protein C694.04c (324 aa).

This sequence belongs to the MYG1 family.

The protein is MYG1 protein C694.04c of Schizosaccharomyces pombe (strain 972 / ATCC 24843) (Fission yeast).